A 298-amino-acid chain; its full sequence is Thymidylate synthase (298 aa).

DUMP is bound by residues Arg25 and 159–160 (RR). Cys179 functions as the Nucleophile in the catalytic mechanism. Residues 200–203 (RSCD), Asn211, and 241–243 (HLY) contribute to the dUMP site. Asp203 lines the (6R)-5,10-methylene-5,6,7,8-tetrahydrofolate pocket. Ala297 contributes to the (6R)-5,10-methylene-5,6,7,8-tetrahydrofolate binding site.

It belongs to the thymidylate synthase family. Bacterial-type ThyA subfamily. In terms of assembly, homodimer.

Its subcellular location is the cytoplasm. It carries out the reaction dUMP + (6R)-5,10-methylene-5,6,7,8-tetrahydrofolate = 7,8-dihydrofolate + dTMP. Its pathway is pyrimidine metabolism; dTTP biosynthesis. Its function is as follows. Catalyzes the reductive methylation of 2'-deoxyuridine-5'-monophosphate (dUMP) to 2'-deoxythymidine-5'-monophosphate (dTMP) while utilizing 5,10-methylenetetrahydrofolate (mTHF) as the methyl donor and reductant in the reaction, yielding dihydrofolate (DHF) as a by-product. This enzymatic reaction provides an intracellular de novo source of dTMP, an essential precursor for DNA biosynthesis. The polypeptide is Thymidylate synthase (Rhodopseudomonas palustris (strain BisA53)).